Here is an 811-residue protein sequence, read N- to C-terminus: tRNA(Met) cytidine acetyltransferase TmcA (811 aa).

Gln267 and Arg440 together coordinate ATP. The N-acetyltransferase domain occupies 474-663 (RKEVYLEEPD…GEFTAIVLKP (190 aa)). Residues 590–592 (IAT), Glu630, and Arg637 contribute to the acetyl-CoA site.

The protein belongs to the TmcA family.

The protein localises to the cytoplasm. The catalysed reaction is cytidine(34) in elongator tRNA(Met) + acetyl-CoA + ATP + H2O = N(4)-acetylcytidine(34) in elongator tRNA(Met) + ADP + phosphate + CoA + H(+). It catalyses the reaction a cytidine in RNA + acetyl-CoA + ATP + H2O = an N(4)-acetylcytidine in RNA + ADP + phosphate + CoA + H(+). It carries out the reaction a cytidine in tRNA + acetyl-CoA + ATP + H2O = an N(4)-acetylcytidine in tRNA + ADP + phosphate + CoA + H(+). The enzyme catalyses a cytidine in mRNA + acetyl-CoA + ATP + H2O = an N(4)-acetylcytidine in mRNA + ADP + phosphate + CoA + H(+). Its function is as follows. Catalyzes the formation of N(4)-acetylcytidine (ac(4)C) at the wobble position of tRNA(Met), by using acetyl-CoA as an acetyl donor and ATP (or GTP). Catalyzes the formation of 404 N(4)-acetylcytidine (ac(4)C) sites in RNA, almost always on the middle C of a CCG motif. There 173 ac(4)C sites in rRNA, 35 in non-coding (nc)RNA, 119 in mRNA and 77 in tRNA. More acetylation is observed at 85 and 95 than at 65 or 75 degrees Celsius. This chain is tRNA(Met) cytidine acetyltransferase TmcA, found in Thermococcus kodakarensis (strain ATCC BAA-918 / JCM 12380 / KOD1) (Pyrococcus kodakaraensis (strain KOD1)).